The sequence spans 545 residues: Probable bifunctional tRNA threonylcarbamoyladenosine biosynthesis protein (545 aa).

A kae1 region spans residues 1 to 329 (MKNTFILGIE…YRTDDVKVTW (329 aa)). Residues His-113, His-117, and Tyr-134 each contribute to the Fe cation site. L-threonylcarbamoyladenylate is bound by residues 134–138 (YVSGA), Asp-166, Gly-179, Glu-183, and Asn-262. Residue Asp-290 coordinates Fe cation. Positions 340–545 (EISPGTSLKL…EEIKKRARYA (206 aa)) constitute a Protein kinase domain. ATP-binding positions include 353–361 (LDNGAEAIV) and Lys-375. The Proton acceptor; for kinase activity role is filled by Asp-462.

It in the N-terminal section; belongs to the KAE1 / TsaD family. In the C-terminal section; belongs to the protein kinase superfamily. Tyr protein kinase family. BUD32 subfamily. In terms of assembly, component of the KEOPS complex that consists of Kae1, Bud32, Cgi121 and Pcc1; the whole complex dimerizes. The cofactor is Fe(2+).

The protein resides in the cytoplasm. It carries out the reaction L-seryl-[protein] + ATP = O-phospho-L-seryl-[protein] + ADP + H(+). The enzyme catalyses L-threonyl-[protein] + ATP = O-phospho-L-threonyl-[protein] + ADP + H(+). It catalyses the reaction L-threonylcarbamoyladenylate + adenosine(37) in tRNA = N(6)-L-threonylcarbamoyladenosine(37) in tRNA + AMP + H(+). Required for the formation of a threonylcarbamoyl group on adenosine at position 37 (t(6)A37) in tRNAs that read codons beginning with adenine. Is a component of the KEOPS complex that is probably involved in the transfer of the threonylcarbamoyl moiety of threonylcarbamoyl-AMP (TC-AMP) to the N6 group of A37. The Kae1 domain likely plays a direct catalytic role in this reaction. The Bud32 domain probably displays kinase activity that regulates Kae1 function. The sequence is that of Probable bifunctional tRNA threonylcarbamoyladenosine biosynthesis protein from Methanosarcina barkeri (strain Fusaro / DSM 804).